We begin with the raw amino-acid sequence, 214 residues long: Ribonuclease HII (214 aa).

In terms of domain architecture, RNase H type-2 spans 26-214; the sequence is EIVCGVDEAG…PVRAALDLIR (189 aa). D32, E33, and D124 together coordinate a divalent metal cation.

The protein belongs to the RNase HII family. The cofactor is Mn(2+). Mg(2+) is required as a cofactor.

The protein localises to the cytoplasm. The enzyme catalyses Endonucleolytic cleavage to 5'-phosphomonoester.. Endonuclease that specifically degrades the RNA of RNA-DNA hybrids. This Burkholderia cenocepacia (strain HI2424) protein is Ribonuclease HII.